Reading from the N-terminus, the 465-residue chain is Phosphatidylserine synthase 1 (465 aa).

Residues 1–35 (MATTFRSQTLSKDDVNYRMHFRMINEQQVEDITIQ) are Cytoplasmic-facing. Residues 36–56 (FFYKPHTISLLTVTVLSLMYF) form a helical membrane-spanning segment. Over 57–70 (AFTRDDGDPDSNLR) the chain is Lumenal. A helical membrane pass occupies residues 71 to 91 (VGLILLVSFFLVISVLAFPNG). The Cytoplasmic portion of the chain corresponds to 92–102 (PFTRPHPAIWR). A helical transmembrane segment spans residues 103–123 (IVFGLSVLYFLFLVFIIFLNW). Over 124-286 (DQVKALMFWL…WLDPKSSLQR (163 aa)) the chain is Lumenal. The chain crosses the membrane as a helical span at residues 287–307 (VMGVYLFMIIWQLTELNTFFL). At 308 to 309 (KH) the chain is on the cytoplasmic side. A helical transmembrane segment spans residues 310-330 (IFVFPACHALSWCRILFIGII). The Lumenal portion of the chain corresponds to 331–355 (TAPTVRQYYAYLTDTQCKRVGTQCW). A helical membrane pass occupies residues 356–376 (VFGAIAFLEALACIKFGQDLF). At 377–380 (SKTQ) the chain is on the cytoplasmic side. Residues 381–401 (ILYVILWLVCLAFITFLCLYV) traverse the membrane as a helical segment. The Lumenal segment spans residues 402 to 465 (MVWYAENYGP…DSRTINGMEK (64 aa)). Residues 446–465 (CSTRKRRDSGDSRTINGMEK) form a disordered region.

Belongs to the phosphatidyl serine synthase family.

It localises to the endoplasmic reticulum membrane. It catalyses the reaction a 1,2-diacyl-sn-glycero-3-phosphoethanolamine + L-serine = a 1,2-diacyl-sn-glycero-3-phospho-L-serine + ethanolamine. The enzyme catalyses a 1,2-diacyl-sn-glycero-3-phosphocholine + L-serine = a 1,2-diacyl-sn-glycero-3-phospho-L-serine + choline. The protein operates within phospholipid metabolism; phosphatidylserine biosynthesis. In terms of biological role, catalyzes a base-exchange reaction in which the polar head group of phosphatidylethanolamine (PE) or phosphatidylcholine (PC) is replaced by L-serine. Catalyzes mainly the conversion of phosphatidylcholine but also converts, in vitro and to a lesser extent, phosphatidylethanolamine. The sequence is that of Phosphatidylserine synthase 1 (ptdss1) from Danio rerio (Zebrafish).